The primary structure comprises 513 residues: MNIDLAALNAGTLWPEYIVTITLIVVLLVDLISGRKASWSLPYLALLGLGIATATLLPMWILENPVSFLGSFTADPLSVVFRAFILISAALTVLMSVRYINQSSLATAEFYVLLLGATLGAMLLSGSSEMAMIFVALELLSITSYLLSGYAKLDKRSNEASLKYLLIGAASSGIFLYGMSLLYGFSGGQTQLTEIAPRIVNLGFPALLSLVLVAAGICFKLSAVPFHQWTPDVYEGSPTPVVAFLSVGSKAAGFALAIRFMTSAYPGFSEQWQTLFVLLAILSMVLGNVVAIAQTSMKRMLAYSSIAQAGYVMIGLAIGTQEGYSSMILYIGTYLFMNLGAFMAVVLFSLRTGTDEITAYSGLYQKDPFLTLVLSLCLLSLAGIPPLAGFFGKLYLFWAAVQSQAYTLVFFGLVTSVASIYYYVRVVKLMLVKEPSPQVLAYSEAGDQDGIQTLKAGMLITTVATVVLGILFPPLISLADTSLRATPSLQQVRTATPVSRVSTGAQAPADHGR.

Transmembrane regions (helical) follow at residues 12–32 (TLWP…VDLI), 41–61 (LPYL…PMWI), 77–97 (LSVV…LMSV), 104–124 (SLAT…AMLL), 130–150 (MAMI…LSGY), 165–185 (LLIG…LYGF), 199–219 (IVNL…GICF), 238–258 (PTPV…ALAI), 272–292 (WQTL…VVAI), 300–320 (MLAY…AIGT), 328–348 (ILYI…VVLF), 372–392 (LVLS…GFFG), 394–414 (LYLF…FGLV), and 456–476 (AGML…PPLI). The segment covering 494–505 (TATPVSRVSTGA) has biased composition (polar residues). The tract at residues 494-513 (TATPVSRVSTGAQAPADHGR) is disordered.

It belongs to the complex I subunit 2 family. As to quaternary structure, NDH-1 can be composed of about 15 different subunits; different subcomplexes with different compositions have been identified which probably have different functions.

It localises to the cell inner membrane. The enzyme catalyses a plastoquinone + NADH + (n+1) H(+)(in) = a plastoquinol + NAD(+) + n H(+)(out). It carries out the reaction a plastoquinone + NADPH + (n+1) H(+)(in) = a plastoquinol + NADP(+) + n H(+)(out). NDH-1 shuttles electrons from an unknown electron donor, via FMN and iron-sulfur (Fe-S) centers, to quinones in the respiratory and/or the photosynthetic chain. The immediate electron acceptor for the enzyme in this species is believed to be plastoquinone. Couples the redox reaction to proton translocation, and thus conserves the redox energy in a proton gradient. Cyanobacterial NDH-1 also plays a role in inorganic carbon-concentration. This Gloeobacter violaceus (strain ATCC 29082 / PCC 7421) protein is NAD(P)H-quinone oxidoreductase subunit 2.